A 138-amino-acid polypeptide reads, in one-letter code: Putative pre-16S rRNA nuclease (138 aa).

This sequence belongs to the YqgF nuclease family.

It localises to the cytoplasm. Its function is as follows. Could be a nuclease involved in processing of the 5'-end of pre-16S rRNA. The chain is Putative pre-16S rRNA nuclease from Haemophilus ducreyi (strain 35000HP / ATCC 700724).